Consider the following 194-residue polypeptide: dCTP deaminase (194 aa).

Residues 110–115, aspartate 128, 136–138, tyrosine 171, lysine 178, and glutamine 182 contribute to the dCTP site; these read RSSLAR and VLE. Glutamate 138 acts as the Proton donor/acceptor in catalysis.

It belongs to the dCTP deaminase family. As to quaternary structure, homotrimer.

It carries out the reaction dCTP + H2O + H(+) = dUTP + NH4(+). The protein operates within pyrimidine metabolism; dUMP biosynthesis; dUMP from dCTP (dUTP route): step 1/2. In terms of biological role, catalyzes the deamination of dCTP to dUTP. This chain is dCTP deaminase, found in Haemophilus ducreyi (strain 35000HP / ATCC 700724).